Consider the following 53-residue polypeptide: Rubredoxin (53 aa).

A Rubredoxin-like domain is found at 1–53 (MTKYVCTVCGYVYDPEVGDPDNNINPGTSFQDIPEDWVCPLCGVGKDQFEEEA). The Fe cation site is built by Cys-6, Cys-9, Cys-39, and Cys-42.

This sequence belongs to the rubredoxin family. It depends on Fe(3+) as a cofactor.

In terms of biological role, rubredoxin is a small nonheme, iron protein lacking acid-labile sulfide. Its single Fe, chelated to 4 Cys, functions as an electron acceptor and may also stabilize the conformation of the molecule. The sequence is that of Rubredoxin from Acetoanaerobium sticklandii (strain ATCC 12662 / DSM 519 / JCM 1433 / CCUG 9281 / NCIMB 10654 / HF) (Clostridium sticklandii).